A 163-amino-acid chain; its full sequence is MSEFYKLAPVDKKGQPFPFDQLKGKVVLIVNVASKCGFTPQYKELEALYKRYKDEGFTIIGFPCNQFGHQEPGSDEEIAQFCQLNYGVTFPIMKKIDVNGGNEDPVYKFLKSQKSGMLGLRGIKWNFEKFLVDKKGKVYERYSSLTKPSSLSETIEELLKEVE.

Cys36 (cysteine sulfenic acid (-SOH) intermediate) is an active-site residue. A disulfide bridge connects residues Cys36 and Cys82.

Belongs to the glutathione peroxidase family. In terms of assembly, interacts with YAP1 and probably YBP1.

The protein localises to the cytoplasm. The protein resides in the mitochondrion intermembrane space. It is found in the peroxisome matrix. The enzyme catalyses a hydroperoxide + [thioredoxin]-dithiol = an alcohol + [thioredoxin]-disulfide + H2O. In terms of biological role, involved in oxidative stress response and redox homeostasis. Functions as a sensor and transducer of hydroperoxide stress. In response to hydroperoxide stress it oxidizes (activates) the transcription activator YAP1, which is involved in transcription activation of genes of the oxidative stress response pathway. May also play a direct role in hydroperoxide scavenging, being the most active of three closely related S.cerevisiae peroxiredoxins (GPX1, GPX2, and HYR1/GPX3) with respect to peroxide and lipid hydroperoxide reduction. The three enzymes are not required for the glutaredoxin-mediated antioxidant function. In the presence of peroxides, HYR1/GPX3 is directly oxidized at Cys-36 to form a cysteine sulfenic acid (-SOH). Cys-36-SOH then forms either an intramolecular disulfide bond (Cys-36 with Cys-82) or a transient, intermolecular disulfide bond with 'Cys-598' of YAP1, which is further resolved into a YAP1 intramolecular disulfide bond ('Cys-303' with 'Cys-598'), which causes its nuclear accumulation and activation, and a reduced Cys-36 in HYR1/GPX3. The sequence is that of Glutathione peroxidase-like peroxiredoxin HYR1 from Saccharomyces cerevisiae (strain ATCC 204508 / S288c) (Baker's yeast).